Here is a 325-residue protein sequence, read N- to C-terminus: Heat-inducible transcription repressor HrcA (325 aa).

This sequence belongs to the HrcA family.

Negative regulator of class I heat shock genes (grpE-dnaK-dnaJ and groELS operons). Prevents heat-shock induction of these operons. This chain is Heat-inducible transcription repressor HrcA, found in Staphylococcus aureus (strain USA300).